The chain runs to 80 residues: Acyl carrier protein (80 aa).

In terms of domain architecture, Carrier spans Lys2–Asn77. Ser37 carries the post-translational modification O-(pantetheine 4'-phosphoryl)serine.

The protein belongs to the acyl carrier protein (ACP) family. Post-translationally, 4'-phosphopantetheine is transferred from CoA to a specific serine of apo-ACP by AcpS. This modification is essential for activity because fatty acids are bound in thioester linkage to the sulfhydryl of the prosthetic group.

The protein resides in the cytoplasm. It functions in the pathway lipid metabolism; fatty acid biosynthesis. Functionally, carrier of the growing fatty acid chain in fatty acid biosynthesis. The protein is Acyl carrier protein of Buchnera aphidicola subsp. Acyrthosiphon pisum (strain 5A).